A 68-amino-acid polypeptide reads, in one-letter code: Suppressor of RNA silencing (68 aa).

Residues leucine 23–valine 43 traverse the membrane as a helical segment.

It belongs to the virgaviridae suppressor of RNA silencing family.

It is found in the host endoplasmic reticulum membrane. In terms of biological role, suppressor of RNA-mediated gene silencing, also known as post-transcriptional gene silencing (PTGS), a mechanism of plant viral defense that performs sequence-specific inhibition of viral mRNAs expression. The RNA silencing suppression activity is variable depending on the origin of the isolate. The protein is Suppressor of RNA silencing (8K protein) of Solanum nigrum (Black nightshade).